The chain runs to 805 residues: MEGSVVVSEKKRISSERRKEKSRDAARCRRSNESEVFYELSHELPLPHNVSSHLDKASIMRLDHQLPAVEKVADAGDLDGETELDKQLNCFYLKALEGFVLVLTEEGDMIYLSENVNKCMGLTQFELTGHSVFDFTHPCDHEELREMLTFRNGPAKKRKRTNHREKFLPSYEMYINQSWKNREYKVSHMEGPSLYRTHACIYDNANNQNHCGYKKPPMTCMVVICEPIPHPSNIEFPLDSKTFLSRHSLDMKFSYCDERVTELVGYEPDELLGRSVYEYYHALDSDHLTKPNYNMFTKGQVTTGQYRMLAKKGGYVWVETQATVIYNSKNSQPQCIVCVNYVLSEVVEKDLILSLGQTASVLIPVESQEIKMPEIFTELNEENNSECLFDKLKQEPESLTVLAPDAGDEIIPLDFSSGDSDKPYEDVPLYNDVMLHSTSNKLESTPITPLPAPEMPKPLRSNVDPALNREVVIKMESNPRTTCASIHHSTAIQARQPFRYQFQSEPSTEPNTPEYCFDVDSEMASEFKLDLVEKLFAIDTEAKAPFYYPGNDLDLEMLAPYIPMDDDFQLRTFDQLSSLECDSSIPQTLGSMTTLFHQSLSPSTSDFKPEDAMSDLKTIIQSPVHMMKESTSAPVSPYNGNRSRTSSPVRPAKAVVDKTEKSRPGTPNLPVPLNKRCTILDEELNPKMICFTQCTAEKRKMESDGPLFQAIGIGTLFQTNVDPGPNSSLQWKRVKGSDSERLSSAEQRTILLLSTDMASQLLGQSFDGTVLPQLTGYDCEVNAPVHGTRNLLQGEELLRALDQAN.

A disordered region spans residues 1–26; that stretch reads MEGSVVVSEKKRISSERRKEKSRDAA. Basic and acidic residues predominate over residues 8–26; sequence SEKKRISSERRKEKSRDAA. In terms of domain architecture, bHLH spans 17–70; that stretch reads RRKEKSRDAARCRRSNESEVFYELSHELPLPHNVSSHLDKASIMRLDHQLPAVE. PAS domains lie at 85–157 and 229–300; these read DKQL…PAKK and PHPS…TKGQ. The 44-residue stretch at 303-346 folds into the PAC domain; the sequence is TGQYRMLAKKGGYVWVETQATVIYNSKNSQPQCIVCVNYVLSEV. 2 positions are modified to 4-hydroxyproline: proline 404 and proline 560. Positions 628–669 are disordered; the sequence is KESTSAPVSPYNGNRSRTSSPVRPAKAVVDKTEKSRPGTPNL. A compositionally biased stretch (polar residues) spans 629-648; that stretch reads ESTSAPVSPYNGNRSRTSSP. Asparagine 782 bears the (3S)-3-hydroxyasparagine mark.

As to quaternary structure, efficient DNA binding requires heterodimerization of an alpha and a beta/ARNT subunit. Post-translationally, in normoxia, is hydroxylated on Pro-404 and Pro-560. The hydroxylated prolines promote interaction with VHL, initiating rapid ubiquitination and subsequent proteasomal degradation. Under hypoxia, proline hydroxylation is impaired and ubiquitination is attenuated, resulting in stabilization. In normoxia, is hydroxylated on Asn-782, thus abrogating interaction with CREBBP and EP300 and preventing transcriptional activation. In terms of processing, the iron and 2-oxoglutarate dependent 3-hydroxylation of asparagine is (S) stereospecific within HIF CTAD domains.

The protein resides in the cytoplasm. It localises to the nucleus. The protein localises to the nucleus speckle. With respect to regulation, induced by reactive oxygen species (ROS). In terms of biological role, functions as a master transcriptional regulator of the adaptive response to hypoxia. Under hypoxic conditions, activates the transcription of over 40 genes, including erythropoietin, glucose transporters, glycolytic enzymes, vascular endothelial growth factor, HILPDA, and other genes whose protein products increase oxygen delivery or facilitate metabolic adaptation to hypoxia. Plays an essential role in embryonic vascularization, tumor angiogenesis and pathophysiology of ischemic disease. The protein is Hypoxia-inducible factor 1-alpha (hif1a) of Xenopus laevis (African clawed frog).